The primary structure comprises 389 residues: Transmembrane protease serine 11A (389 aa).

The Cytoplasmic portion of the chain corresponds to 1 to 23; sequence MEVAGYGTHNRDLKQWMVTLLSA. The chain crosses the membrane as a helical; Signal-anchor for type II membrane protein span at residues 24–44; it reads LSLMMVVVTIGLLALFLVFDI. The SEA domain occupies 31 to 148; that stretch reads VTIGLLALFL…SLVQVKDCGK (118 aa). Residues 45–389 are Extracellular-facing; it reads QVNSNSGQKS…RHWIASKTGL (345 aa). The Peptidase S1 domain maps to 158–388; the sequence is IVSGNPAAKG…YRHWIASKTG (231 aa). Cysteine 183 and cysteine 199 form a disulfide bridge. Active-site charge relay system residues include histidine 198 and aspartate 243. A glycan (N-linked (GlcNAc...) asparagine) is linked at asparagine 274. Cystine bridges form between cysteine 308-cysteine 324 and cysteine 335-cysteine 364. The active-site Charge relay system is the serine 339.

Belongs to the peptidase S1 family.

It is found in the membrane. Probable serine protease which may play a role in cellular senescence. Overexpression inhibits cell growth and induce G1 cell cycle arrest. The chain is Transmembrane protease serine 11A (Tmprss11a) from Mus musculus (Mouse).